Reading from the N-terminus, the 549-residue chain is MQADFVIIGSGSAGSALAYRLSEDGKNSVLVIEAGGSDFGPFIQMPAALAWPMSMKRYNWGYLSEPEPNLNNRRITAPRGKVIGGSSSINGMVYVRGHAEDFNRWEELGASGWAYADVLPYFKRMEHSHGGEEGWRGTDGPLHVQRGGFTNPLFRAFIEAGKQAGFETTEDYNGSKQEGFGLMEQTIFAGRRWSAANAYLKPALKRDNVGIVYGLARRIVIENGRATGVEIERGGRTEVVKANREVIVSASSFNSPKLLMLSGIGPAKHLKEMGIEVKADRPGVGANLQDHMEFYFQQVSTKPVSLYSWLPWFWQGVAGAQWLLSKGGLGASNQFEACAFLRSAPGLKQPDIQYHFLPVAISYDGKAAAKSHGFQVHVGYNLSKSRGSVTLRSPDPKADPVLRFNYMSHPEDWEKFRHCVRLTREIFGQKAFDAYRGPEIQPGEGVQSDEQIDSFLREHLESAYHPCGTCKMGAKDDPMAVVDPQTRVIGVDGLRVADSSIFPHVTYGNLNGPSIMTGEKAADHILGKQPLARSNQEPWINPRAAVSDR.

4-33 is an FAD binding site; sequence DFVIIGSGSAGSALAYRLSEDGKNSVLVIE. Residue His-465 is the Proton acceptor of the active site. The segment at 530 to 549 is disordered; it reads PLARSNQEPWINPRAAVSDR.

Belongs to the GMC oxidoreductase family. It depends on FAD as a cofactor.

It carries out the reaction choline + A = betaine aldehyde + AH2. It catalyses the reaction betaine aldehyde + NAD(+) + H2O = glycine betaine + NADH + 2 H(+). Its pathway is amine and polyamine biosynthesis; betaine biosynthesis via choline pathway; betaine aldehyde from choline (cytochrome c reductase route): step 1/1. Its function is as follows. Involved in the biosynthesis of the osmoprotectant glycine betaine. Catalyzes the oxidation of choline to betaine aldehyde and betaine aldehyde to glycine betaine at the same rate. The sequence is that of Oxygen-dependent choline dehydrogenase from Rhizobium etli (strain ATCC 51251 / DSM 11541 / JCM 21823 / NBRC 15573 / CFN 42).